Consider the following 456-residue polypeptide: Carnosine N-methyltransferase unmet (456 aa).

6 residues coordinate S-adenosyl-L-methionine: arginine 154, glycine 195, glutamate 216, aspartate 282, phenylalanine 283, and cysteine 299. The carnosine site is built by aspartate 303, histidine 334, and tyrosine 385. Over residues 402 to 418 the composition is skewed to basic and acidic residues; it reads RGKRKASREPHDLIVRE. The tract at residues 402 to 456 is disordered; that stretch reads RGKRKASREPHDLIVREDSEEEGEQQPERNETEEKQQLKPLATANCETEIKEQPS. Phosphoserine occurs at positions 408 and 420. Positions 427-438 are enriched in basic and acidic residues; it reads QPERNETEEKQQ.

It belongs to the carnosine N-methyltransferase family. Associates with the GATOR2 complex; the interaction is probably direct and is inhibited by S-adenosyl-L-methionine binding. Associates with the GATOR1 complex; the interaction is probably indirect and mediated by the GATOR2 complex.

The enzyme catalyses carnosine + S-adenosyl-L-methionine = anserine + S-adenosyl-L-homocysteine + H(+). Its function is as follows. S-adenosyl-L-methionine-binding protein that acts as a sensor to signal methionine availability to the mTORC1 signaling pathway. Associates with the GATOR2 complex in the absence of methionine to inhibit mTORC1 signaling, but dissociates in the presence of the methionine derivative S-adenosyl-L-methionine; S-adenosyl-L-homocysteine binding does not induce dissociation. Required for mTORC1 pathway response to methionine starvation. Exerts a protective function on developing egg chambers by inhibiting mTORC1 signaling under starvation conditions. May also function as a N-methyltransferase that mediates the formation of anserine (beta-alanyl-N(Pi)-methyl-L-histidine) from carnosine. It is unclear whether this protein has retained N-methyltransferase activity or if it is an evolutionary intermediate whose substrate binding ability has been co-opted to function as a nutrient sensor for mTORC1 signaling. This chain is Carnosine N-methyltransferase unmet, found in Drosophila melanogaster (Fruit fly).